Reading from the N-terminus, the 865-residue chain is Centrosomal protein of 97 kDa (865 aa).

8 LRR repeats span residues 37–58, 59–80, 81–102, 103–124, 125–146, 147–168, 171–192, and 196–205; these read DIHT…EKCK, RLIQ…AKLT, LLRV…KELV, HLEW…NSCT, ALQH…SKLV, SLKT…PAYL, SLAI…SFLA, and ELEQLSIMNN. Residues 211–249 enclose the LRRCT domain; that stretch reads TPSIPGFDYRPYIVSWCLNLRVLDGYVISQKESLKAEWL. The tract at residues 300 to 750 is CCP110-binding; sequence HQRQLMNQSQ…RYGKESDLGD (451 aa). A phosphoserine mark is found at S308, S413, and S500. The tract at residues 506-529 is disordered; the sequence is ESTEQKQSDIKKPENTQPENKETI. The segment covering 508-527 has biased composition (basic and acidic residues); sequence TEQKQSDIKKPENTQPENKE. The residue at position 530 (S530) is a Phosphoserine. Position 542 is a phosphothreonine (T542). Residues 558–587 form the IQ domain; it reads LNDAATKLQACWRGFYARNYNPQAKDVRYE. Positions 587 to 865 are interaction with MPHOSPH9; that stretch reads EIRLRRMQEH…FQLLHVGVTV (279 aa). The disordered stretch occupies residues 715-769; that stretch reads QHSLDFEKSSTEGSESSIMGNSIDTVRYGKESDLGDVSEEHGEWNKESSNNEQDN. The segment covering 725 to 738 has biased composition (polar residues); that stretch reads TEGSESSIMGNSID. Positions 741–760 are enriched in basic and acidic residues; it reads RYGKESDLGDVSEEHGEWNK. A Phosphoserine modification is found at S763.

As to quaternary structure, interacts with CALM1, CEP76, KIF24 and TALPID3. Interacts with CCP110. ENKD1 competes with CEP97 for binding to CCP110, destabilizing the interaction between CP110 and CEP97 which promotes the removal of CCP110 and CEP97 from the mother centriole and allows the initiation of ciliogenesis. Via its interaction with CCP110, may indirectly interact with HERC2 and NEURL4. Interacts with MPHOSPH9.

The protein localises to the cytoplasm. Its subcellular location is the cytoskeleton. It is found in the microtubule organizing center. The protein resides in the centrosome. It localises to the centriole. Functionally, acts as a key negative regulator of ciliogenesis in collaboration with CCP110 by capping the mother centriole thereby preventing cilia formation. Required for recruitment of CCP110 to the centrosome. In Homo sapiens (Human), this protein is Centrosomal protein of 97 kDa (CEP97).